A 292-amino-acid polypeptide reads, in one-letter code: AKT-interacting protein (292 aa).

The segment covering 1 to 11 has biased composition (polar residues); that stretch reads MNPFWSMSTSS. A disordered region spans residues 1–63; the sequence is MNPFWSMSTS…TSPAPAAQST (63 aa). Residues 14–23 show a composition bias toward basic and acidic residues; that stretch reads KRSEGEEKTL. Residue Ser30 is modified to Phosphoserine. In terms of domain architecture, UBC core spans 74–222; the sequence is YLEYSLLAEF…VVDSVKVCTA (149 aa).

Belongs to the ubiquitin-conjugating enzyme family. FTS subfamily. Component of the FTS/Hook/FHIP complex (FHF complex), composed of AKTIP/FTS, FHIP1B, and one or more members of the Hook family of proteins HOOK1, HOOK2, and HOOK3. Interacts directly with HOOK1, HOOK2 and HOOK3. The FHF complex associates with the homotypic vesicular sorting complex (the HOPS complex). Also interacts with AKT1. May interact with FHIP1A.

The protein localises to the cytoplasm. It localises to the cell membrane. Its function is as follows. Component of the FTS/Hook/FHIP complex (FHF complex). The FHF complex may function to promote vesicle trafficking and/or fusion via the homotypic vesicular protein sorting complex (the HOPS complex). Regulates apoptosis by enhancing phosphorylation and activation of AKT1. Increases release of TNFSF6 via the AKT1/GSK3B/NFATC1 signaling cascade. FHF complex promotes the distribution of AP-4 complex to the perinuclear area of the cell. This Homo sapiens (Human) protein is AKT-interacting protein.